Consider the following 234-residue polypeptide: Proteasome subunit alpha type-2 (234 aa).

The residue at position 2 (alanine 2) is an N-acetylalanine. Phosphotyrosine is present on tyrosine 121.

It belongs to the peptidase T1A family. As to quaternary structure, the 26S proteasome consists of a 20S proteasome core and two 19S regulatory subunits. The 20S proteasome core is composed of 28 subunits that are arranged in four stacked rings, resulting in a barrel-shaped structure. The two end rings are each formed by seven alpha subunits, and the two central rings are each formed by seven beta subunits. The catalytic chamber with the active sites is on the inside of the barrel.

Its subcellular location is the cytoplasm. The protein resides in the nucleus. Its function is as follows. The proteasome is a multicatalytic proteinase complex which is characterized by its ability to cleave peptides with Arg, Phe, Tyr, Leu, and Glu adjacent to the leaving group at neutral or slightly basic pH. The proteasome has an ATP-dependent proteolytic activity. PSMA2 may have a potential regulatory effect on another component(s) of the proteasome complex through tyrosine phosphorylation. The protein is Proteasome subunit alpha type-2 (psma2) of Carassius auratus (Goldfish).